The following is a 273-amino-acid chain: TIP41-like protein (273 aa).

It belongs to the TIP41 family.

It is found in the cytoplasm. In terms of biological role, may be a regulator of serine/threonine-protein phosphatases 2A (PP2A) and 4 (PP4). This chain is TIP41-like protein (tiprl), found in Xenopus tropicalis (Western clawed frog).